Reading from the N-terminus, the 638-residue chain is Mediator of RNA polymerase II transcription subunit 17 (638 aa).

Residues 1–21 (MSDSFNLPLRPLTEKRERPDP) are disordered.

This sequence belongs to the Mediator complex subunit 17 family. Component of the Mediator complex.

It is found in the nucleus. Its function is as follows. Component of the Mediator complex, a coactivator involved in the regulated transcription of nearly all RNA polymerase II-dependent genes. Mediator functions as a bridge to convey information from gene-specific regulatory proteins to the basal RNA polymerase II transcription machinery. Mediator is recruited to promoters by direct interactions with regulatory proteins and serves as a scaffold for the assembly of a functional preinitiation complex with RNA polymerase II and the general transcription factors. The sequence is that of Mediator of RNA polymerase II transcription subunit 17 (srb4) from Aspergillus oryzae (strain ATCC 42149 / RIB 40) (Yellow koji mold).